A 391-amino-acid chain; its full sequence is ATP phosphoribosyltransferase regulatory subunit (391 aa).

The protein belongs to the class-II aminoacyl-tRNA synthetase family. HisZ subfamily. Heteromultimer composed of HisG and HisZ subunits.

The protein resides in the cytoplasm. Its pathway is amino-acid biosynthesis; L-histidine biosynthesis; L-histidine from 5-phospho-alpha-D-ribose 1-diphosphate: step 1/9. In terms of biological role, required for the first step of histidine biosynthesis. May allow the feedback regulation of ATP phosphoribosyltransferase activity by histidine. In Prochlorococcus marinus (strain NATL2A), this protein is ATP phosphoribosyltransferase regulatory subunit.